The primary structure comprises 411 residues: Aspartate kinase (411 aa).

Positions 265–348 (LTIRGVPDTP…KIAKVSIVGV (84 aa)) constitute an ACT domain.

The protein belongs to the aspartokinase family.

The protein resides in the cytoplasm. It carries out the reaction L-aspartate + ATP = 4-phospho-L-aspartate + ADP. The protein operates within amino-acid biosynthesis; L-lysine biosynthesis via DAP pathway; (S)-tetrahydrodipicolinate from L-aspartate: step 1/4. Its pathway is amino-acid biosynthesis; L-methionine biosynthesis via de novo pathway; L-homoserine from L-aspartate: step 1/3. It functions in the pathway amino-acid biosynthesis; L-threonine biosynthesis; L-threonine from L-aspartate: step 1/5. Its activity is regulated as follows. Allosterically feedback inhibited by L-lysine and L-threonine individually and also subject to a concerted feedback inhibition by these amino acids. Its function is as follows. Involved in the biosynthesis of L-aspartate-beta-semialdehyde which is a central intermediate in the biosynthesis of different amino acids (L-lysine, L-methionine, L-threonine). Catalyzes the phosphorylation of the beta-carboxyl group of L-aspartate to yield 4-phospho-L-aspartate. In Pseudomonas putida (strain ATCC 47054 / DSM 6125 / CFBP 8728 / NCIMB 11950 / KT2440), this protein is Aspartate kinase.